The sequence spans 408 residues: D-inositol 3-phosphate glycosyltransferase (408 aa).

A 1D-myo-inositol 3-phosphate-binding site is contributed by His-7. UDP-N-acetyl-alpha-D-glucosamine contacts are provided by residues 13 to 14 (QP) and Gly-21. Residues 18–23 (DAGGMN), Lys-76, Tyr-109, Thr-133, and Arg-153 each bind 1D-myo-inositol 3-phosphate. Positions 227, 232, and 288 each coordinate UDP-N-acetyl-alpha-D-glucosamine. Residues Phe-297, Arg-298, and Ala-300 each contribute to the Mg(2+) site. Residues Glu-310 and Glu-318 each coordinate UDP-N-acetyl-alpha-D-glucosamine. Thr-324 serves as a coordination point for Mg(2+).

Belongs to the glycosyltransferase group 1 family. MshA subfamily. As to quaternary structure, homodimer.

The enzyme catalyses 1D-myo-inositol 3-phosphate + UDP-N-acetyl-alpha-D-glucosamine = 1D-myo-inositol 2-acetamido-2-deoxy-alpha-D-glucopyranoside 3-phosphate + UDP + H(+). Catalyzes the transfer of a N-acetyl-glucosamine moiety to 1D-myo-inositol 3-phosphate to produce 1D-myo-inositol 2-acetamido-2-deoxy-glucopyranoside 3-phosphate in the mycothiol biosynthesis pathway. This is D-inositol 3-phosphate glycosyltransferase from Paenarthrobacter aurescens (strain TC1).